A 401-amino-acid polypeptide reads, in one-letter code: UPF0283 membrane protein SO_1811 (401 aa).

The tract at residues 1–22 (MSVELLPHSTEPHANGADKSVS) is disordered. Transmembrane regions (helical) follow at residues 99–119 (LARL…VLGL), 129–149 (LFSF…VGVI), and 239–259 (ESAV…IILW).

The protein belongs to the UPF0283 family.

It is found in the cell inner membrane. The chain is UPF0283 membrane protein SO_1811 from Shewanella oneidensis (strain ATCC 700550 / JCM 31522 / CIP 106686 / LMG 19005 / NCIMB 14063 / MR-1).